The following is a 169-amino-acid chain: Thiol peroxidase (169 aa).

The 149-residue stretch at 19–167 (LKVGDRAPEA…YDEVVNKVKE (149 aa)) folds into the Thioredoxin domain. The Cysteine sulfenic acid (-SOH) intermediate role is filled by C61. The cysteines at positions 61 and 95 are disulfide-linked.

The protein belongs to the peroxiredoxin family. Tpx subfamily. In terms of assembly, homodimer.

It catalyses the reaction a hydroperoxide + [thioredoxin]-dithiol = an alcohol + [thioredoxin]-disulfide + H2O. Functionally, thiol-specific peroxidase that catalyzes the reduction of hydrogen peroxide and organic hydroperoxides to water and alcohols, respectively. Plays a role in cell protection against oxidative stress by detoxifying peroxides. The protein is Thiol peroxidase of Aquifex aeolicus (strain VF5).